We begin with the raw amino-acid sequence, 366 residues long: MASYSQFLTKAQEDELRSIANAIVTPGKGILAADESTGSMDKRLNSIGLENTEENRRKYRQLLFTAGADLNKYISGVIMFHETFYQKTDDGKPFTALLQEQGIIPGIKVDKGVVPMAGTIGEGTTQGLDDLNARCAQYKKDGAQFAKWRCVHKISSTTPSVTALKEIASNLGSRYASICQQNGLVPIVEPEILPDGEHCLARGQKITETVLSYVYHALNEHHVFLEGTLLKPNMVTSGQSFTGEKPSNADIGLATVTALQRGVPSAVPGVVFLSGGQSEEDATLNLNAINQVSGKKPWALTFSYGRALQASCLAKWAGKDENIAAAQEVLLHRAQVNSLASVGKYTGDASADAAASQSLFVANHSY.

Substrate contacts are provided by Arg-56 and Lys-147. The Proton acceptor role is filled by Glu-189. Lys-231 acts as the Schiff-base intermediate with dihydroxyacetone-P in catalysis.

It belongs to the class I fructose-bisphosphate aldolase family. In terms of tissue distribution, ubiquitous.

The enzyme catalyses beta-D-fructose 1,6-bisphosphate = D-glyceraldehyde 3-phosphate + dihydroxyacetone phosphate. Its pathway is carbohydrate degradation; glycolysis; D-glyceraldehyde 3-phosphate and glycerone phosphate from D-glucose: step 4/4. May be involved in the metabolism of fructose-bisphosphate (beta-D-fructose 1,6-bisphosphate) and of fructose 1-phosphate. This Caenorhabditis elegans protein is Fructose-bisphosphate aldolase 1 (aldo-1).